The chain runs to 271 residues: Thiazole synthase (271 aa).

Lysine 104 (schiff-base intermediate with DXP) is an active-site residue. 1-deoxy-D-xylulose 5-phosphate-binding positions include glycine 165, 192-193 (AG), and 214-215 (NT).

The protein belongs to the ThiG family. In terms of assembly, homotetramer. Forms heterodimers with either ThiH or ThiS.

Its subcellular location is the cytoplasm. The enzyme catalyses [ThiS sulfur-carrier protein]-C-terminal-Gly-aminoethanethioate + 2-iminoacetate + 1-deoxy-D-xylulose 5-phosphate = [ThiS sulfur-carrier protein]-C-terminal Gly-Gly + 2-[(2R,5Z)-2-carboxy-4-methylthiazol-5(2H)-ylidene]ethyl phosphate + 2 H2O + H(+). It functions in the pathway cofactor biosynthesis; thiamine diphosphate biosynthesis. Its function is as follows. Catalyzes the rearrangement of 1-deoxy-D-xylulose 5-phosphate (DXP) to produce the thiazole phosphate moiety of thiamine. Sulfur is provided by the thiocarboxylate moiety of the carrier protein ThiS. In vitro, sulfur can be provided by H(2)S. In Burkholderia thailandensis (strain ATCC 700388 / DSM 13276 / CCUG 48851 / CIP 106301 / E264), this protein is Thiazole synthase.